Reading from the N-terminus, the 254-residue chain is Leucyl/phenylalanyl-tRNA--protein transferase (254 aa).

It belongs to the L/F-transferase family.

It is found in the cytoplasm. The catalysed reaction is N-terminal L-lysyl-[protein] + L-leucyl-tRNA(Leu) = N-terminal L-leucyl-L-lysyl-[protein] + tRNA(Leu) + H(+). It carries out the reaction N-terminal L-arginyl-[protein] + L-leucyl-tRNA(Leu) = N-terminal L-leucyl-L-arginyl-[protein] + tRNA(Leu) + H(+). It catalyses the reaction L-phenylalanyl-tRNA(Phe) + an N-terminal L-alpha-aminoacyl-[protein] = an N-terminal L-phenylalanyl-L-alpha-aminoacyl-[protein] + tRNA(Phe). Its function is as follows. Functions in the N-end rule pathway of protein degradation where it conjugates Leu, Phe and, less efficiently, Met from aminoacyl-tRNAs to the N-termini of proteins containing an N-terminal arginine or lysine. This is Leucyl/phenylalanyl-tRNA--protein transferase from Burkholderia cenocepacia (strain HI2424).